The chain runs to 345 residues: Phosphoribosylformylglycinamidine cyclo-ligase (345 aa).

Belongs to the AIR synthase family.

It localises to the cytoplasm. The catalysed reaction is 2-formamido-N(1)-(5-O-phospho-beta-D-ribosyl)acetamidine + ATP = 5-amino-1-(5-phospho-beta-D-ribosyl)imidazole + ADP + phosphate + H(+). Its pathway is purine metabolism; IMP biosynthesis via de novo pathway; 5-amino-1-(5-phospho-D-ribosyl)imidazole from N(2)-formyl-N(1)-(5-phospho-D-ribosyl)glycinamide: step 2/2. This is Phosphoribosylformylglycinamidine cyclo-ligase from Klebsiella pneumoniae (strain 342).